The sequence spans 829 residues: Colorectal mutant cancer protein (829 aa).

Disordered regions lie at residues Arg114–Ser139, Thr282–Asp320, and Glu672–Ala700. Residues Glu123–Asp132 show a composition bias toward basic and acidic residues. Residues Gln285 to Leu312 are compositionally biased toward polar residues. Residues Ser689 to Ala698 are compositionally biased toward basic and acidic residues. A Nuclear localization signal motif is present at residues Lys766–Lys782. The PDZ-binding motif lies at Glu826 to Leu829. Ser828 is modified (phosphoserine).

The protein belongs to the MCC family. In terms of assembly, interacts with SCRIB (via phosphorylated PDZ-binding motif), EZR, SNX27, NHERF1 and NHERF2. Interacts with CTNNB1; the interaction is enhanced upon Wnt stimulation. Interacts with MYH10. Interacts with CCAR2. In terms of tissue distribution, expressed in a variety of tissues.

It localises to the cell membrane. Its subcellular location is the cell projection. The protein resides in the lamellipodium. It is found in the nucleus. The protein localises to the cytoplasm. Candidate for the putative colorectal tumor suppressor gene located at 5q21. Suppresses cell proliferation and the Wnt/b-catenin pathway in colorectal cancer cells. Inhibits DNA binding of b-catenin/TCF/LEF transcription factors. Involved in cell migration independently of RAC1, CDC42 and p21-activated kinase (PAK) activation. Represses the beta-catenin pathway (canonical Wnt signaling pathway) in a CCAR2-dependent manner by sequestering CCAR2 to the cytoplasm, thereby impairing its ability to inhibit SIRT1 which is involved in the deacetylation and negative regulation of beta-catenin (CTNB1) transcriptional activity. The polypeptide is Colorectal mutant cancer protein (MCC) (Homo sapiens (Human)).